The chain runs to 134 residues: Small ribosomal subunit protein bS6 (134 aa).

A disordered region spans residues 103–134 (AAPVKSAEEGTEEVAAEAATEAPAETTTTVEV). Positions 118 to 134 (AEAATEAPAETTTTVEV) are enriched in low complexity.

It belongs to the bacterial ribosomal protein bS6 family.

Its function is as follows. Binds together with bS18 to 16S ribosomal RNA. In Geobacter sp. (strain M21), this protein is Small ribosomal subunit protein bS6.